Reading from the N-terminus, the 312-residue chain is Very-long-chain 3-oxoacyl-CoA reductase (312 aa).

Residues 4–24 (ALPAAGFLYWVGAGTVAYLAL) traverse the membrane as a helical segment. 50 to 79 (GEWAVVTGGTDGIGKSYAEELAKRGMKVVL) lines the NADP(+) pocket. 2 helical membrane-spanning segments follow: residues 182-202 (GAIL…LTIY) and 271-291 (GYLI…WIYL). Residue serine 189 participates in substrate binding. Residue tyrosine 202 is the Proton acceptor of the active site. The Di-lysine motif motif lies at 308–312 (KIKKN).

Belongs to the short-chain dehydrogenases/reductases (SDR) family. 17-beta-HSD 3 subfamily.

It is found in the endoplasmic reticulum membrane. The enzyme catalyses a very-long-chain (3R)-3-hydroxyacyl-CoA + NADP(+) = a very-long-chain 3-oxoacyl-CoA + NADPH + H(+). The catalysed reaction is 17beta-estradiol + NAD(+) = estrone + NADH + H(+). It catalyses the reaction 17beta-estradiol + NADP(+) = estrone + NADPH + H(+). It carries out the reaction 3-oxooctadecanoyl-CoA + NADPH + H(+) = (3R)-hydroxyoctadecanoyl-CoA + NADP(+). The enzyme catalyses (7Z,10Z,13Z,16Z)-3-oxodocosatetraenoyl-CoA + NADPH + H(+) = (3R)-hydroxy-(7Z,10Z,13Z,16Z)-docosatetraenoyl-CoA + NADP(+). The catalysed reaction is 3-oxo-(7Z,10Z,13Z,16Z,19Z)-docosapentaenoyl-CoA + NADPH + H(+) = (3R)-hydroxy-(7Z,10Z,13Z,16Z,19Z)-docosapentaenoyl-CoA + NADP(+). It catalyses the reaction (8Z,11Z,14Z)-3-oxoeicosatrienoyl-CoA + NADPH + H(+) = (3R)-hydroxy-(8Z,11Z,14Z)-eicosatrienoyl-CoA + NADP(+). The protein operates within lipid metabolism; fatty acid biosynthesis. It participates in steroid biosynthesis; estrogen biosynthesis. Catalyzes the second of the four reactions of the long-chain fatty acids elongation cycle. This endoplasmic reticulum-bound enzymatic process, allows the addition of two carbons to the chain of long- and very long-chain fatty acids/VLCFAs per cycle. This enzyme has a 3-ketoacyl-CoA reductase activity, reducing 3-ketoacyl-CoA to 3-hydroxyacyl-CoA, within each cycle of fatty acid elongation. Thereby, it may participate in the production of VLCFAs of different chain lengths that are involved in multiple biological processes as precursors of membrane lipids and lipid mediators. May also catalyze the transformation of estrone (E1) into estradiol (E2) and play a role in estrogen formation. The polypeptide is Very-long-chain 3-oxoacyl-CoA reductase (HSD17B12) (Macaca fascicularis (Crab-eating macaque)).